Consider the following 293-residue polypeptide: Small ribosomal subunit biogenesis GTPase RsgA (293 aa).

The CP-type G domain maps to 63–223 (KNELVRPPIA…VADTPGFSSL (161 aa)). GTP-binding positions include 112 to 115 (SKMD) and 166 to 174 (GQSGVGKSS). Cysteine 247, cysteine 252, histidine 254, and cysteine 260 together coordinate Zn(2+).

This sequence belongs to the TRAFAC class YlqF/YawG GTPase family. RsgA subfamily. In terms of assembly, monomer. Associates with 30S ribosomal subunit, binds 16S rRNA. Zn(2+) serves as cofactor.

The protein localises to the cytoplasm. Functionally, one of several proteins that assist in the late maturation steps of the functional core of the 30S ribosomal subunit. Helps release RbfA from mature subunits. May play a role in the assembly of ribosomal proteins into the subunit. Circularly permuted GTPase that catalyzes slow GTP hydrolysis, GTPase activity is stimulated by the 30S ribosomal subunit. The sequence is that of Small ribosomal subunit biogenesis GTPase RsgA from Bacillus cytotoxicus (strain DSM 22905 / CIP 110041 / 391-98 / NVH 391-98).